Reading from the N-terminus, the 154-residue chain is Myoglobin (154 aa).

A Globin domain is found at 2–148; the sequence is GLSDGEWQLV…FRNDMAAKYK (147 aa). Position 4 is a phosphoserine (S4). Nitrite is bound at residue H65. H65 provides a ligand contact to O2. At T68 the chain carries Phosphothreonine. Residue H94 participates in heme b binding.

This sequence belongs to the globin family. As to quaternary structure, monomeric.

Its subcellular location is the cytoplasm. The protein resides in the sarcoplasm. The catalysed reaction is Fe(III)-heme b-[protein] + nitric oxide + H2O = Fe(II)-heme b-[protein] + nitrite + 2 H(+). It catalyses the reaction H2O2 + AH2 = A + 2 H2O. Its function is as follows. Monomeric heme protein which primary function is to store oxygen and facilitate its diffusion within muscle tissues. Reversibly binds oxygen through a pentacoordinated heme iron and enables its timely and efficient release as needed during periods of heightened demand. Depending on the oxidative conditions of tissues and cells, and in addition to its ability to bind oxygen, it also has a nitrite reductase activity whereby it regulates the production of bioactive nitric oxide. Under stress conditions, like hypoxia and anoxia, it also protects cells against reactive oxygen species thanks to its pseudoperoxidase activity. This Ochotona princeps (Southern American pika) protein is Myoglobin (MB).